The chain runs to 161 residues: Putative esterase C31F10.02 (161 aa).

The protein belongs to the thioesterase PaaI family.

The sequence is that of Putative esterase C31F10.02 from Schizosaccharomyces pombe (strain 972 / ATCC 24843) (Fission yeast).